Consider the following 528-residue polypeptide: Lysine--tRNA ligase (528 aa).

The 'HIGH' region motif lies at 36–44 (PSGTVHIGN). The 'KMSKS' region signature appears at 287–291 (KMSSS).

It belongs to the class-I aminoacyl-tRNA synthetase family.

It localises to the cytoplasm. It catalyses the reaction tRNA(Lys) + L-lysine + ATP = L-lysyl-tRNA(Lys) + AMP + diphosphate. This Treponema pallidum (strain Nichols) protein is Lysine--tRNA ligase (lysS).